We begin with the raw amino-acid sequence, 149 residues long: Ricin B-like lectin (149 aa).

An N-acetylserine modification is found at S2. Residues D21, G24, N39, and N47 each coordinate a carbohydrate. Residues 110–112 (PNL) form an involved in dimerization region.

As to quaternary structure, homodimer. Post-translationally, the N-terminus is blocked.

Its function is as follows. Lectin specific for terminal, non-reducing N-acetylgalactosamine (Gal-NAc)-containing carbohydrates including N,N'-diacetyllactosediamine/LDN (GalNAcbeta1-4GlcNAc, LacdiNAc). Specific also for carbohydrates containing N-acetylglucosamine (-GlcNAc) or N-acetyllactosamine (-Galbeta1-4GlcNAc) at the reducing end. Agglutinates human blood group A, AB, B and O erythrocytes with a strong preference for group A. Agglutinates bovine erythrocytes with a very low specificity. Binds carbohydrates bivalently, which is required for its biological activity. Exhibits insecticidal activity against the fruit fly D.melanogaster, mosquito A.aegypti, and amoebozoa A.castellanii. Has anti-nutritional activity against Colorado potato beetle L.decemlineata, and against worm C.elegans. Has antiproliferative activity against human leukemic T-cells. Has an immunostimulatory effect on human antigen-presenting dendritic cells, which are subsequently able to induce efficient T-cell immune responses. The polypeptide is Ricin B-like lectin (Clitocybe nebularis (Clouded agaric)).